The sequence spans 330 residues: Mas-related G-protein coupled receptor member X2 (330 aa).

At 1 to 33 (MDPTTPAWGTESTTMNGNDQALPLLCGKETLIL) the chain is on the extracellular side. A helical transmembrane segment spans residues 34–54 (VLLILFIALVGLVGNAFVLWL). The Cytoplasmic segment spans residues 55 to 63 (LGFRMRRNA). The helical transmembrane segment at 64-84 (FSVYVLSLAGADFLFLCFPMI) threads the bilayer. The Extracellular portion of the chain corresponds to 85–96 (NCLEYLINFFHS). Residues 97 to 117 (ISINFPSFFTTVMTCAYLAGL) form a helical membrane-spanning segment. The Cytoplasmic segment spans residues 118–144 (SMLSAISTERCLSVLWPIWYRCRRPRH). A helical membrane pass occupies residues 145-165 (LSAVLCVLLWALSLLLSILEG). At 166-184 (KFCGLLFSDGDSGWCQTFD) the chain is on the extracellular side. Residues 185–205 (FITAAWLMFLFVVLCGSSLAL) form a helical membrane-spanning segment. The Cytoplasmic portion of the chain corresponds to 206 to 228 (LVRILCGSQGLPLTRLYLTILLT). Residues 229–249 (VLIFLLCGLPFGIQWFLILWI) form a helical membrane-spanning segment. At 250–264 (WKNSDVLFCHIHPVS) the chain is on the extracellular side. A helical membrane pass occupies residues 265-285 (VVLSSFNSSANPIIYFFVGSF). Residues 286-330 (RKQWRLRQPVLKLALQRALQDTAEVDHSEGCFSQGTLEMSGSSLV) are Cytoplasmic-facing.

It belongs to the G-protein coupled receptor 1 family. Mas subfamily.

The protein localises to the cell membrane. Its function is as follows. Mast cell-specific receptor for basic secretagogues, i.e. cationic amphiphilic drugs, as well as endo- or exogenous peptides, consisting of a basic head group and a hydrophobic core. Recognizes and binds small molecules containing a cyclized tetrahydroisoquinoline (THIQ), such as non-steroidal neuromuscular blocking drugs (NMBDs), including tubocurarine and atracurium. In response to these compounds, mediates pseudo-allergic reactions characterized by histamine release, inflammation and airway contraction. This chain is Mas-related G-protein coupled receptor member X2 (MRGPRX2), found in Rhinopithecus bieti (Black snub-nosed monkey).